Here is a 259-residue protein sequence, read N- to C-terminus: uncharacterized protein (259 aa).

The 150-residue stretch at Gln110–Thr259 folds into the N-acetyltransferase domain.

Functionally, may be involved in maturation of the outermost layer of the spore. This is an uncharacterized protein from Bacillus subtilis (strain 168).